The sequence spans 769 residues: Elongation factor G, mitochondrial (769 aa).

The transit peptide at M1 to L42 directs the protein to the mitochondrion. The tr-type G domain maps to T74–N356. GTP is bound by residues A83–T90, D154–H158, and N208–D211.

The protein belongs to the TRAFAC class translation factor GTPase superfamily. Classic translation factor GTPase family. EF-G/EF-2 subfamily.

The protein localises to the mitochondrion. It functions in the pathway protein biosynthesis; polypeptide chain elongation. Its function is as follows. Mitochondrial GTPase that catalyzes the GTP-dependent ribosomal translocation step during translation elongation. During this step, the ribosome changes from the pre-translocational (PRE) to the post-translocational (POST) state as the newly formed A-site-bound peptidyl-tRNA and P-site-bound deacylated tRNA move to the P and E sites, respectively. Catalyzes the coordinated movement of the two tRNA molecules, the mRNA and conformational changes in the ribosome. In Debaryomyces hansenii (strain ATCC 36239 / CBS 767 / BCRC 21394 / JCM 1990 / NBRC 0083 / IGC 2968) (Yeast), this protein is Elongation factor G, mitochondrial.